The primary structure comprises 596 residues: Arginine--tRNA ligase (596 aa).

The 'HIGH' region motif lies at 139-149 (ANPTGPLHVGH).

The protein belongs to the class-I aminoacyl-tRNA synthetase family. Monomer.

It is found in the cytoplasm. The catalysed reaction is tRNA(Arg) + L-arginine + ATP = L-arginyl-tRNA(Arg) + AMP + diphosphate. The protein is Arginine--tRNA ligase of Paraburkholderia phytofirmans (strain DSM 17436 / LMG 22146 / PsJN) (Burkholderia phytofirmans).